A 334-amino-acid polypeptide reads, in one-letter code: Protein-glutamate methylesterase/protein-glutamine glutaminase 2 (334 aa).

Residues N2–L120 enclose the Response regulatory domain. D53 is subject to 4-aspartylphosphate. In terms of domain architecture, CheB-type methylesterase spans P134–I334. Residues S157, H184, and D277 contribute to the active site.

It belongs to the CheB family. In terms of processing, phosphorylated by CheA. Phosphorylation of the N-terminal regulatory domain activates the methylesterase activity.

The protein resides in the cytoplasm. It catalyses the reaction [protein]-L-glutamate 5-O-methyl ester + H2O = L-glutamyl-[protein] + methanol + H(+). The enzyme catalyses L-glutaminyl-[protein] + H2O = L-glutamyl-[protein] + NH4(+). In terms of biological role, involved in chemotaxis. Part of a chemotaxis signal transduction system that modulates chemotaxis in response to various stimuli. Catalyzes the demethylation of specific methylglutamate residues introduced into the chemoreceptors (methyl-accepting chemotaxis proteins or MCP) by CheR. Also mediates the irreversible deamidation of specific glutamine residues to glutamic acid. This chain is Protein-glutamate methylesterase/protein-glutamine glutaminase 2, found in Burkholderia orbicola (strain AU 1054).